A 178-amino-acid chain; its full sequence is Large ribosomal subunit protein uL13m (178 aa).

The protein belongs to the universal ribosomal protein uL13 family. In terms of assembly, component of the mitochondrial ribosome large subunit (39S) which comprises a 16S rRNA and about 50 distinct proteins. Interacts with OXA1L.

The protein localises to the mitochondrion. This is Large ribosomal subunit protein uL13m (MRPL13) from Bos taurus (Bovine).